A 551-amino-acid polypeptide reads, in one-letter code: Electron transfer flavoprotein-ubiquinone oxidoreductase (551 aa).

Valine 10–cysteine 24 lines the FAD pocket. Residues cysteine 496, cysteine 520, cysteine 523, and cysteine 526 each contribute to the [4Fe-4S] cluster site. The 4Fe-4S ferredoxin-type domain occupies lysine 511–proline 540.

This sequence belongs to the ETF-QO/FixC family. It depends on [4Fe-4S] cluster as a cofactor. FAD serves as cofactor.

The catalysed reaction is a ubiquinone + reduced [electron-transfer flavoprotein] = a ubiquinol + oxidized [electron-transfer flavoprotein] + H(+). Functionally, accepts electrons from ETF and reduces ubiquinone. In Pseudomonas aeruginosa (strain ATCC 15692 / DSM 22644 / CIP 104116 / JCM 14847 / LMG 12228 / 1C / PRS 101 / PAO1), this protein is Electron transfer flavoprotein-ubiquinone oxidoreductase.